The sequence spans 102 residues: Small ribosomal subunit protein eS24 (102 aa).

The protein belongs to the eukaryotic ribosomal protein eS24 family.

The polypeptide is Small ribosomal subunit protein eS24 (Methanococcus maripaludis (strain C7 / ATCC BAA-1331)).